The sequence spans 206 residues: Cytochrome c biogenesis ATP-binding export protein CcmA (206 aa).

The region spanning 2–206 is the ABC transporter domain; it reads LEARDVVCIR…IQLTPSEGTP (205 aa). Residue 34 to 41 coordinates ATP; that stretch reads GANGVGKT.

This sequence belongs to the ABC transporter superfamily. CcmA exporter (TC 3.A.1.107) family. As to quaternary structure, the complex is composed of two ATP-binding proteins (CcmA) and two transmembrane proteins (CcmB).

It localises to the cell inner membrane. It carries out the reaction heme b(in) + ATP + H2O = heme b(out) + ADP + phosphate + H(+). Part of the ABC transporter complex CcmAB involved in the biogenesis of c-type cytochromes; once thought to export heme, this seems not to be the case, but its exact role is uncertain. Responsible for energy coupling to the transport system. The chain is Cytochrome c biogenesis ATP-binding export protein CcmA from Pectobacterium atrosepticum (strain SCRI 1043 / ATCC BAA-672) (Erwinia carotovora subsp. atroseptica).